A 660-amino-acid chain; its full sequence is DNA mismatch repair protein MutL (660 aa).

Belongs to the DNA mismatch repair MutL/HexB family.

This protein is involved in the repair of mismatches in DNA. It is required for dam-dependent methyl-directed DNA mismatch repair. May act as a 'molecular matchmaker', a protein that promotes the formation of a stable complex between two or more DNA-binding proteins in an ATP-dependent manner without itself being part of a final effector complex. This is DNA mismatch repair protein MutL from Streptococcus equi subsp. zooepidemicus (strain MGCS10565).